A 1210-amino-acid chain; its full sequence is Epidermal growth factor receptor (1210 aa).

Positions 1–24 are cleaved as a signal peptide; that stretch reads MRPSGTAGAALLALLAALCPASRA. At 25 to 645 the chain is on the extracellular side; the sequence is LEEKKVCQGT…CARNGPKIPS (621 aa). A disulfide bridge links cysteine 31 with cysteine 58. One copy of the Approximate repeat lies at 75-300; sequence DLSFLKTIQE…CVKKCPRNYV (226 aa). Residues asparagine 128, asparagine 175, and asparagine 196 are each glycosylated (N-linked (GlcNAc...) asparagine). Disulfide bonds link cysteine 157–cysteine 187, cysteine 190–cysteine 199, cysteine 194–cysteine 207, cysteine 215–cysteine 223, cysteine 219–cysteine 231, cysteine 232–cysteine 240, cysteine 236–cysteine 248, cysteine 251–cysteine 260, cysteine 264–cysteine 291, cysteine 295–cysteine 307, cysteine 311–cysteine 326, cysteine 329–cysteine 333, and cysteine 337–cysteine 362. Serine 229 is modified (phosphoserine). N-linked (GlcNAc...) asparagine glycans are attached at residues asparagine 352, asparagine 361, asparagine 413, and asparagine 444. The stretch at 390 to 600 is one Approximate repeat; the sequence is QELDILKTVK…CVKTCPAGVM (211 aa). Intrachain disulfides connect cysteine 470–cysteine 499, cysteine 506–cysteine 515, cysteine 510–cysteine 523, cysteine 526–cysteine 535, cysteine 539–cysteine 555, cysteine 558–cysteine 571, cysteine 562–cysteine 579, cysteine 582–cysteine 591, cysteine 595–cysteine 617, cysteine 620–cysteine 628, and cysteine 624–cysteine 636. A glycan (N-linked (GlcNAc...) asparagine) is linked at asparagine 528. The N-linked (GlcNAc...) asparagine glycan is linked to asparagine 568. Asparagine 603 carries N-linked (GlcNAc...) asparagine glycosylation. The helical transmembrane segment at 646-668 threads the bilayer; it reads IATGMVGALLLLLVVALGIGLFM. The Cytoplasmic segment spans residues 669-1210; the sequence is RRRHIVRKRT…APQSSEFIGA (542 aa). Phosphothreonine; by PKC and PKD/PRKD1 is present on threonine 678. Residues 688–704 form an important for dimerization, phosphorylation and activation region; the sequence is LVEPLTPSGEAPNQALL. Threonine 693 carries the post-translational modification Phosphothreonine; by PKD/PRKD1. Residue serine 695 is modified to Phosphoserine. A Protein kinase domain is found at 712-979; that stretch reads FKKIKVLGSG…KMARDPQRYL (268 aa). Residue lysine 716 forms a Glycyl lysine isopeptide (Lys-Gly) (interchain with G-Cter in ubiquitin) linkage. Residue 718–726 participates in ATP binding; sequence LGSGAFGTV. A Glycyl lysine isopeptide (Lys-Gly) (interchain with G-Cter in ubiquitin) cross-link involves residue lysine 737. Lysine 745 contributes to the ATP binding site. An N6-(2-hydroxyisobutyryl)lysine modification is found at lysine 745. Residues lysine 754 and lysine 757 each participate in a glycyl lysine isopeptide (Lys-Gly) (interchain with G-Cter in ubiquitin) cross-link. 790–791 serves as a coordination point for ATP; the sequence is TQ. Catalysis depends on aspartate 837, which acts as the Proton acceptor. An ATP-binding site is contributed by aspartate 855. Lysine 867 participates in a covalent cross-link: Glycyl lysine isopeptide (Lys-Gly) (interchain with G-Cter in ubiquitin). The residue at position 869 (tyrosine 869) is a Phosphotyrosine. Glycyl lysine isopeptide (Lys-Gly) (interchain with G-Cter in ubiquitin) cross-links involve residues lysine 929, lysine 960, and lysine 970. Residues serine 991 and serine 995 each carry the phosphoserine modification. Phosphotyrosine; by autocatalysis occurs at positions 998 and 1016. Phosphoserine is present on residues serine 1026 and serine 1039. Phosphothreonine is present on threonine 1041. Position 1042 is a phosphoserine (serine 1042). Cysteine 1049 carries S-palmitoyl cysteine lipidation. Serine 1064 is subject to Phosphoserine. Phosphotyrosine is present on tyrosine 1069. Phosphoserine is present on residues serine 1070, serine 1071, and serine 1081. Phosphotyrosine; by autocatalysis occurs at positions 1092 and 1110. The segment at 1097–1137 is disordered; that stretch reads VPKRPAGSVQNPVYHNQPLNPAPSRDPHYQDPHSTAVGNPE. 2 stretches are compositionally biased toward polar residues: residues 1104–1115 and 1128–1137; these read SVQNPVYHNQPL and PHSTAVGNPE. Residue cysteine 1146 is the site of S-palmitoyl cysteine attachment. Position 1166 is a phosphoserine (serine 1166). Residues tyrosine 1172 and tyrosine 1197 each carry the phosphotyrosine; by autocatalysis modification. Arginine 1199 is modified (omega-N-methylarginine).

Belongs to the protein kinase superfamily. Tyr protein kinase family. EGF receptor subfamily. Binding of the ligand triggers homo- and/or heterodimerization of the receptor triggering its autophosphorylation. Heterodimer with ERBB2. Forms a complex with CCDC88A/GIV (via SH2-like regions) and GNAI3 which leads to enhanced EGFR signaling and triggering of cell migration; binding to CCDC88A requires autophosphorylation of the EGFR C-terminal region, and ligand stimulation is required for recruitment of GNAI3 to the complex. Interacts with ERRFI1; inhibits dimerization of the kinase domain and autophosphorylation. Part of a complex with ERBB2 and either PIK3C2A or PIK3C2B. Interacts with GRB2; an adapter protein coupling the receptor to downstream signaling pathways. Interacts with GAB2; involved in signaling downstream of EGFR. Interacts with STAT3; mediates EGFR downstream signaling in cell proliferation. Interacts with RIPK1; involved in NF-kappa-B activation. Interacts (autophosphorylated) with CBL, CBLB and CBLC; involved in EGFR ubiquitination and regulation; interaction with CBL is reduced in the presence of tensin TNS4. Interacts with SOCS5; regulates EGFR degradation through ELOC- and ELOB-mediated ubiquitination and proteasomal degradation. Interacts with PRMT5; methylates EGFR and enhances interaction with PTPN6. Interacts (phosphorylated) with PTPN6; inhibits EGFR-dependent activation of MAPK/ERK. Interacts with COPG1; essential for regulation of EGF-dependent nuclear transport of EGFR by retrograde trafficking from the Golgi to the ER. Interacts with TNK2; this interaction is dependent on EGF stimulation and kinase activity of EGFR. Interacts with PCNA; positively regulates PCNA. Interacts with PELP1. Interacts with MUC1. Interacts with AP2M1. Interacts with FER. May interact with EPS8; mediates EPS8 phosphorylation. Interacts (via SH2 domains) with GRB2, NCK1 and NCK2. Interacts with ATXN2. Interacts with GAREM1. Interacts (ubiquitinated) with ANKRD13A/B/D; the interaction is direct and may regulate EGFR internalization after EGF stimulation. Interacts with GPER1; the interaction occurs in an estrogen-dependent manner. Interacts (via C-terminal cytoplasmic kinase domain) with ZPR1 (via zinc fingers). Interacts with RNF115 and RNF126. Interacts with GPRC5A (via its transmembrane domain). Interacts with FAM83B; positively regulates EGFR inducing its autophosphorylation in absence of stimulation by EGF. Interacts with LAPTM4B; positively correlates with EGFR activation. Interacts with STX19. Interacts with CD44. Interacts with PGRMC1; the interaction requires PGRMC1 homodimerization. Interacts with PIKFYVE. Interacts with NEU3. Interacts with TRAF4. Interacts with the ant venom OMEGA-myrmeciitoxin(02)-Mg1a. Interacts with CD82; this interaction facilitates ligand-induced endocytosis of the receptor and its subsequent desensitization. Phosphorylated on Tyr residues in response to EGF. Phosphorylation at Ser-695 is partial and occurs only if Thr-693 is phosphorylated. Phosphorylation at Thr-678 and Thr-693 by PRKD1 inhibits EGF-induced MAPK8/JNK1 activation. Dephosphorylation by PTPRJ prevents endocytosis and stabilizes the receptor at the plasma membrane. Autophosphorylation at Tyr-1197 is stimulated by methylation at Arg-1199 and enhances interaction with PTPN6. Autophosphorylation at Tyr-1092 and/or Tyr-1110 recruits STAT3. Dephosphorylated by PTPN1 and PTPN2. In terms of processing, monoubiquitinated and polyubiquitinated upon EGF stimulation; which does not affect tyrosine kinase activity or signaling capacity but may play a role in lysosomal targeting. Polyubiquitin linkage is mainly through 'Lys-63', but linkage through 'Lys-48', 'Lys-11' and 'Lys-29' also occurs. Deubiquitination by OTUD7B prevents degradation. Ubiquitinated by RNF115 and RNF126. Ubiquitinated by ZNRF1 or CBL at different lysines in response to EGF stimulation; leading to recruitment of the ESCRT machinery and subsequent degradation in the lysosomes. Deubiquitinated by UCHL1 leading to the inhibition of its degradation. Post-translationally, palmitoylated on Cys residues by ZDHHC20. Palmitoylation inhibits internalization after ligand binding, and increases the persistence of tyrosine-phosphorylated EGFR at the cell membrane. Palmitoylation increases the amplitude and duration of EGFR signaling. Methylated. Methylation at Arg-1199 by PRMT5 stimulates phosphorylation at Tyr-1197. Hypothalamus.

It is found in the cell membrane. It localises to the endoplasmic reticulum membrane. Its subcellular location is the golgi apparatus membrane. The protein resides in the nucleus membrane. The protein localises to the endosome. It is found in the endosome membrane. It localises to the nucleus. It catalyses the reaction L-tyrosyl-[protein] + ATP = O-phospho-L-tyrosyl-[protein] + ADP + H(+). Endocytosis and inhibition of the activated EGFR by phosphatases like PTPRJ and PTPRK constitute immediate regulatory mechanisms. Upon EGF-binding phosphorylates EPS15 that regulates EGFR endocytosis and activity. Moreover, inducible feedback inhibitors including LRIG1, SOCS4, SOCS5 and ERRFI1 constitute alternative regulatory mechanisms for the EGFR signaling. In terms of biological role, receptor tyrosine kinase binding ligands of the EGF family and activating several signaling cascades to convert extracellular cues into appropriate cellular responses. Known ligands include EGF, TGFA/TGF-alpha, AREG, epigen/EPGN, BTC/betacellulin, epiregulin/EREG and HBEGF/heparin-binding EGF. Ligand binding triggers receptor homo- and/or heterodimerization and autophosphorylation on key cytoplasmic residues. The phosphorylated receptor recruits adapter proteins like GRB2 which in turn activates complex downstream signaling cascades. Activates at least 4 major downstream signaling cascades including the RAS-RAF-MEK-ERK, PI3 kinase-AKT, PLCgamma-PKC and STATs modules. May also activate the NF-kappa-B signaling cascade. Also directly phosphorylates other proteins like RGS16, activating its GTPase activity and probably coupling the EGF receptor signaling to the G protein-coupled receptor signaling. Also phosphorylates MUC1 and increases its interaction with SRC and CTNNB1/beta-catenin. Positively regulates cell migration via interaction with CCDC88A/GIV which retains EGFR at the cell membrane following ligand stimulation, promoting EGFR signaling which triggers cell migration. Plays a role in enhancing learning and memory performance. Plays a role in mammalian pain signaling (long-lasting hypersensitivity). This is Epidermal growth factor receptor (EGFR) from Macaca mulatta (Rhesus macaque).